A 288-amino-acid polypeptide reads, in one-letter code: Phosphopantetheinyl transferase (288 aa).

CoA contacts are provided by residues Arg60, Arg99–Lys104, and Asn118–His121. Residues Asp139 and Glu196 each coordinate Mg(2+). A CoA-binding site is contributed by Glu196–Lys200.

It belongs to the P-Pant transferase superfamily. AcpS family. Monomer.

The protein localises to the cytoplasm. Its subcellular location is the cytosol. It carries out the reaction apo-[ACP] + CoA = holo-[ACP] + adenosine 3',5'-bisphosphate + H(+). It functions in the pathway lipid metabolism; fatty acid biosynthesis. Functionally, phosphopantetheinyl transferase that is essential for attaching phosphopantetheine to ACP domains of the polyunsaturated fatty acid (PUFA) synthase converting the inactive apo-synthase to the active holo-synthase. The sequence is that of Phosphopantetheinyl transferase from Thraustochytrium sp. (strain ATCC 26185 / S-3).